Consider the following 286-residue polypeptide: MATATLPATVGVIGLWDGTTDGKEGFMDYATGDTNVKQPKEYEIEVHDIRKLDPQPTLLNNGYELVDIPTVVTEEQFSESGKSEKGKAYIKDVYFAECKRIIQEVAGGVDTIIPVSFRMREQKGEKESTTKKLGNIESRYAPRPVAHLDRDTPTAITVLEETVGKEKAQELLSKHKRNPATMWPLCFLNHDRIPTWNYDTHVGHVWSLNDPRVSDRGEKTYDCVVKYDERYDYHYVSDLKPEECLVFCSFDSIPKYAMPHSAFWDNNVPADAPNRRSIEVRSLVFF.

The protein belongs to the asaB hydroxylase/desaturase family.

It functions in the pathway secondary metabolite biosynthesis. Oxidoreductase; part of the gene cluster that mediates the biosynthesis of squalestatin S1 (SQS1, also known as zaragozic acid A), a heavily oxidized fungal polyketide that offers potent cholesterol lowering activity by targeting squalene synthase (SS). SQS1 is composed of a 2,8-dioxobicyclic[3.2.1]octane-3,4,5-tricarboxyclic acid core that is connected to two lipophilic polyketide arms. These initial steps feature the priming of an unusual benzoic acid starter unit onto the highly reducing polyketide synthase clz14, followed by oxaloacetate extension and product release to generate a tricarboxylic acid containing product. The phenylalanine ammonia lyase (PAL) clz10 and the acyl-CoA ligase clz12 are involved in transforming phenylalanine into benzoyl-CoA. The citrate synthase-like protein clz17 is involved in connecting the C-alpha-carbons of the hexaketide chain and oxaloacetate to afford the tricarboxylic acid unit. The potential hydrolytic enzymes, clz11 and clz13, are in close proximity to pks2 and may participate in product release. On the other side, the tetraketide arm is synthesized by a the squalestatin tetraketide synthase clz2 and enzymatically esterified to the core in the last biosynthetic step, by the acetyltransferase clz6. The biosynthesis of the tetraketide must involve 3 rounds of chain extension. After the first and second rounds methyl-transfer occurs, and in all rounds of extension the ketoreductase and dehydratase are active. The enoyl reductase and C-MeT of clz2 are not active in the final round of extension. The acetyltransferase clz6 appears to have a broad substrate selectivity for its acyl CoA substrate, allowing the in vitro synthesis of novel squalestatins. The biosynthesis of SQS1 requires several oxidative steps likely performed by oxidoreductases clz3, clz15 and clz16. Finally, in support of the identification of the cluster as being responsible for SQS1 production, the cluster contains a gene encoding a putative squalene synthase (SS) clz20, suggesting a likely mechanism for self-resistance. The chain is Oxidoreductase clz15 from Cochliobolus lunatus (Filamentous fungus).